Here is a 350-residue protein sequence, read N- to C-terminus: Dihydroorotate dehydrogenase (quinone) (350 aa).

FMN-binding positions include 67-71 (AGFDK) and Gly91. Lys71 serves as a coordination point for substrate. 116-120 (NRMGF) provides a ligand contact to substrate. The FMN site is built by Asn144 and Asn177. A substrate-binding site is contributed by Asn177. Catalysis depends on Ser180, which acts as the Nucleophile. Asn182 lines the substrate pocket. FMN is bound by residues Lys213 and Thr241. 242 to 243 (NT) serves as a coordination point for substrate. The interval 249–268 (ASLHSDAADEEGGLSGAPIT) is disordered. Residues Gly264, Gly291, and 312-313 (YT) each bind FMN.

It belongs to the dihydroorotate dehydrogenase family. Type 2 subfamily. As to quaternary structure, monomer. FMN is required as a cofactor.

It localises to the cell membrane. The catalysed reaction is (S)-dihydroorotate + a quinone = orotate + a quinol. It functions in the pathway pyrimidine metabolism; UMP biosynthesis via de novo pathway; orotate from (S)-dihydroorotate (quinone route): step 1/1. Its function is as follows. Catalyzes the conversion of dihydroorotate to orotate with quinone as electron acceptor. This is Dihydroorotate dehydrogenase (quinone) from Natronomonas pharaonis (strain ATCC 35678 / DSM 2160 / CIP 103997 / JCM 8858 / NBRC 14720 / NCIMB 2260 / Gabara) (Halobacterium pharaonis).